We begin with the raw amino-acid sequence, 100 residues long: Urease subunit gamma (100 aa).

It belongs to the urease gamma subunit family. As to quaternary structure, heterotrimer of UreA (gamma), UreB (beta) and UreC (alpha) subunits. Three heterotrimers associate to form the active enzyme.

The protein localises to the cytoplasm. It catalyses the reaction urea + 2 H2O + H(+) = hydrogencarbonate + 2 NH4(+). Its pathway is nitrogen metabolism; urea degradation; CO(2) and NH(3) from urea (urease route): step 1/1. This Streptomyces coelicolor (strain ATCC BAA-471 / A3(2) / M145) protein is Urease subunit gamma.